The following is a 376-amino-acid chain: Queuine tRNA-ribosyltransferase (376 aa).

Catalysis depends on D92, which acts as the Proton acceptor. Residues 92 to 96, D146, Q190, and G217 each bind substrate; that span reads DSGGF. Residues 248–254 are RNA binding; sequence GVGRPED. The Nucleophile role is filled by D267. Residues 272–276 form an RNA binding; important for wobble base 34 recognition region; the sequence is TRNAR. C305, C307, C310, and H337 together coordinate Zn(2+).

Belongs to the queuine tRNA-ribosyltransferase family. In terms of assembly, homodimer. Within each dimer, one monomer is responsible for RNA recognition and catalysis, while the other monomer binds to the replacement base PreQ1. It depends on Zn(2+) as a cofactor.

The enzyme catalyses 7-aminomethyl-7-carbaguanine + guanosine(34) in tRNA = 7-aminomethyl-7-carbaguanosine(34) in tRNA + guanine. Its pathway is tRNA modification; tRNA-queuosine biosynthesis. Catalyzes the base-exchange of a guanine (G) residue with the queuine precursor 7-aminomethyl-7-deazaguanine (PreQ1) at position 34 (anticodon wobble position) in tRNAs with GU(N) anticodons (tRNA-Asp, -Asn, -His and -Tyr). Catalysis occurs through a double-displacement mechanism. The nucleophile active site attacks the C1' of nucleotide 34 to detach the guanine base from the RNA, forming a covalent enzyme-RNA intermediate. The proton acceptor active site deprotonates the incoming PreQ1, allowing a nucleophilic attack on the C1' of the ribose to form the product. After dissociation, two additional enzymatic reactions on the tRNA convert PreQ1 to queuine (Q), resulting in the hypermodified nucleoside queuosine (7-(((4,5-cis-dihydroxy-2-cyclopenten-1-yl)amino)methyl)-7-deazaguanosine). The polypeptide is Queuine tRNA-ribosyltransferase (Stenotrophomonas maltophilia (strain R551-3)).